The chain runs to 264 residues: Indole-3-glycerol phosphate synthase (264 aa).

This sequence belongs to the TrpC family.

The catalysed reaction is 1-(2-carboxyphenylamino)-1-deoxy-D-ribulose 5-phosphate + H(+) = (1S,2R)-1-C-(indol-3-yl)glycerol 3-phosphate + CO2 + H2O. It functions in the pathway amino-acid biosynthesis; L-tryptophan biosynthesis; L-tryptophan from chorismate: step 4/5. In Rhizorhabdus wittichii (strain DSM 6014 / CCUG 31198 / JCM 15750 / NBRC 105917 / EY 4224 / RW1) (Sphingomonas wittichii), this protein is Indole-3-glycerol phosphate synthase.